Here is a 122-residue protein sequence, read N- to C-terminus: Large ribosomal subunit protein uL14 (122 aa).

This sequence belongs to the universal ribosomal protein uL14 family. In terms of assembly, part of the 50S ribosomal subunit. Forms a cluster with proteins L3 and L19. In the 70S ribosome, L14 and L19 interact and together make contacts with the 16S rRNA in bridges B5 and B8.

Binds to 23S rRNA. Forms part of two intersubunit bridges in the 70S ribosome. The chain is Large ribosomal subunit protein uL14 from Maricaulis maris (strain MCS10) (Caulobacter maris).